The following is a 493-amino-acid chain: Cholesteryl ester transfer protein (493 aa).

The signal sequence occupies residues 1-17 (MLAATVLTLALLGNVHA). N-linked (GlcNAc...) asparagine glycosylation is found at Asn59 and Asn105. Cys160 and Cys201 form a disulfide bridge. N-linked (GlcNAc...) asparagine glycosylation is found at Asn257, Asn358, and Asn413.

It belongs to the BPI/LBP/Plunc superfamily. BPI/LBP family. Probably primarily expressed in liver and adipose tissues. Detected in adrenal gland, mesenteric fat, spleen and aorta.

It localises to the secreted. It carries out the reaction cholesteryl (9Z-octadecenoate)(in) = cholesteryl (9Z-octadecenoate)(out). The enzyme catalyses 1,2,3-tri-(9Z-octadecenoyl)-glycerol(in) = 1,2,3-tri-(9Z-octadecenoyl)-glycerol(out). The catalysed reaction is cholesteryl (9Z,12Z)-octadecadienoate(in) = cholesteryl (9Z,12Z)-octadecadienoate(out). Functionally, involved in the transfer of neutral lipids, including cholesteryl ester and triglyceride, among lipoprotein particles. Allows the net movement of cholesteryl ester from high density lipoproteins/HDL to triglyceride-rich very low density lipoproteins/VLDL, and the equimolar transport of triglyceride from VLDL to HDL. Regulates the reverse cholesterol transport, by which excess cholesterol is removed from peripheral tissues and returned to the liver for elimination. This Macaca fascicularis (Crab-eating macaque) protein is Cholesteryl ester transfer protein.